The sequence spans 173 residues: Zinc resistance-associated protein homolog (173 aa).

Positions Met1–Ala28 are cleaved as a signal peptide.

Belongs to the ZraP family.

This is Zinc resistance-associated protein homolog from Nitratidesulfovibrio vulgaris (strain ATCC 29579 / DSM 644 / CCUG 34227 / NCIMB 8303 / VKM B-1760 / Hildenborough) (Desulfovibrio vulgaris).